A 586-amino-acid chain; its full sequence is A-type ATP synthase subunit A (586 aa).

Gly233–Thr240 is an ATP binding site.

Belongs to the ATPase alpha/beta chains family. In terms of assembly, has multiple subunits with at least A(3), B(3), C, D, E, F, H, I and proteolipid K(x).

The protein localises to the cell membrane. It catalyses the reaction ATP + H2O + 4 H(+)(in) = ADP + phosphate + 5 H(+)(out). Functionally, component of the A-type ATP synthase that produces ATP from ADP in the presence of a proton gradient across the membrane. The A chain is the catalytic subunit. In Methanococcus aeolicus (strain ATCC BAA-1280 / DSM 17508 / OCM 812 / Nankai-3), this protein is A-type ATP synthase subunit A.